The sequence spans 504 residues: Serine O-succinyltransferase (504 aa).

Residues 1–26 constitute a mitochondrion transit peptide; the sequence is MLRASSKRLQLSWQVFRRFQSSNPQL. The tract at residues 49 to 70 is disordered; the sequence is QACPNSVDPSASITSPSLSSGP. The segment covering 57 to 70 has biased composition (low complexity); it reads PSASITSPSLSSGP. In terms of domain architecture, AB hydrolase-1 spans 117 to 395; sequence NAILLHTGLS…SAEEIIKLNE (279 aa). An important for substrate specificity region spans residues 124-127; that stretch reads GLSA. The active-site Nucleophile is the S221. R290 is a substrate binding site. Residues D443 and H480 contribute to the active site. D481 contributes to the substrate binding site.

It belongs to the AB hydrolase superfamily. MetX family.

It is found in the mitochondrion. The catalysed reaction is succinyl-CoA + L-serine = O-succinyl-L-serine + CoA. Its pathway is amino-acid biosynthesis; L-cysteine biosynthesis; L-cysteine from L-serine: step 1/2. Functionally, transfers a succinyl group from succinyl-CoA to L-serine, forming succinyl-L-serine. Also has weak serine acetyl transferase activity and homoserine succinyl transferase activity. This is Serine O-succinyltransferase from Schizosaccharomyces pombe (strain 972 / ATCC 24843) (Fission yeast).